Here is a 2253-residue protein sequence, read N- to C-terminus: Genome polyprotein (2253 aa).

A disulfide bridge links Cys-627 with Cys-694. A Cell attachment site motif is present at residues 750-752 (RVD). Residues 825 to 920 (LVYKNRGFYK…LFPGRKEITQ (96 aa)) form the LRAT domain. Residues His-835 and His-846 each act as for protein 2A H-NC in the active site. Cys-904 (for protein 2A H-NC; Acyl-thioester intermediate) is an active-site residue. The chain crosses the membrane as a helical span at residues 1002–1022 (IVLYCHAPNMLTTMCLGTLLV). In terms of domain architecture, SF3 helicase spans 1205–1366 (YSEMMRVNVR…ASYSRNNKLD (162 aa)). At Tyr-1559 the chain carries O-(5'-phospho-RNA)-tyrosine. Residues 1586–1775 (APYMQDLEHC…RAAAVHFISN (190 aa)) enclose the Peptidase C3 domain. Catalysis depends on for protease 3C activity residues His-1626, Asp-1664, and Cys-1739. The active-site Acyl-thioester intermediate is Cys-1970. Residues 2018-2132 (PYNYGLDYSS…SVSSPLDAEY (115 aa)) enclose the RdRp catalytic domain. The Mg(2+) site is built by Asp-2024 and Asp-2118.

This sequence belongs to the picornaviruses polyprotein family. As to quaternary structure, interacts with capsid protein VP1 and capsid protein VP3 to form heterotrimeric protomers. Five protomers subsequently associate to form pentamers which serve as building blocks for the capsid. Interacts with capsid protein VP0, and capsid protein VP3 to form heterotrimeric protomers. Five protomers subsequently associate to form pentamers which serve as building blocks for the capsid. In terms of assembly, interacts with capsid protein VP0 and capsid protein VP1 to form heterotrimeric protomers. Five protomers subsequently associate to form pentamers which serve as building blocks for the capsid. As to quaternary structure, homohexamer; forms a hexameric ring structure with 6-fold symmetry characteristic of AAA+ ATPases. Homodimer. Interacts with host ACBD3. In terms of assembly, interacts with RNA-directed RNA polymerase. As to quaternary structure, interacts with Viral protein genome-linked. Mg(2+) serves as cofactor. Post-translationally, VPg is uridylylated by the polymerase and is covalently linked to the 5'-end of genomic RNA. This uridylylated form acts as a nucleotide-peptide primer for the polymerase. In terms of processing, specific enzymatic cleavages yield mature proteins. All cleavages are catalyzed by P3C.

Its subcellular location is the virion. It is found in the host cytoplasm. The protein resides in the host nucleus. The protein localises to the host nucleolus. It localises to the host cytoplasmic vesicle membrane. Its subcellular location is the host endoplasmic reticulum membrane. It is found in the host Golgi apparatus membrane. It catalyses the reaction RNA(n) + a ribonucleoside 5'-triphosphate = RNA(n+1) + diphosphate. It carries out the reaction a ribonucleoside 5'-triphosphate + H2O = a ribonucleoside 5'-diphosphate + phosphate + H(+). The enzyme catalyses Selective cleavage of Gln-|-Gly bond in the poliovirus polyprotein. In other picornavirus reactions Glu may be substituted for Gln, and Ser or Thr for Gly.. In terms of biological role, forms an icosahedral capsid of pseudo T=3 symmetry together with capsid proteins VP1 and VP3. The capsid is 300 Angstroms in diameter, composed of 60 copies of each capsid protein and enclosing the viral positive strand RNA genome. The attachment to the host cell receptor induces virion internalization predominantly through clathrin-mediated endocytosis. Binds packaging signals present in the viral RNA. Its function is as follows. Forms an icosahedral capsid of pseudo T=3 symmetry together with capsid proteins VP0 and VP1. The capsid is 300 Angstroms in diameter, composed of 60 copies of each capsid protein and enclosing the viral positive strand RNA genome. The attachment to the host cell receptor induces virion internalization predominantly through clathrin-mediated endocytosis. Binds packaging signals present in the viral RNA. Forms an icosahedral capsid of pseudo T=3 symmetry together with capsid proteins VP0 and VP3. The capsid is 300 Angstroms in diameter, composed of 60 copies of each capsid protein and enclosing the viral positive strand RNA genome. The attachment to the host cell receptor induces virion internalization predominantly through clathrin-mediated endocytosis. Binds packaging signals present in the viral RNA. Functionally, mediates self-processing of the polyprotein by a translational effect termed 'ribosome skipping'. Mechanistically, 2A1-mediated cleavage occurs between the C-terminal glycine and the proline of the downstream protein 2A2. In terms of biological role, plays an essential role in the virus replication cycle by acting as a viroporin. Creates a pore in the host endoplasmic reticulum and as a consequence releases Ca2+ in the cytoplasm of infected cell. In turn, high levels of cytoplasmic calcium may trigger membrane trafficking and transport of viral ER-associated proteins to viroplasms, sites of viral genome replication. Its function is as follows. Induces and associates with structural rearrangements of intracellular membranes. Displays RNA-binding, nucleotide binding and NTPase activities. May play a role in virion morphogenesis and viral RNA encapsidation by interacting with the capsid protein VP3. Localizes the viral replication complex to the surface of membranous vesicles. It inhibits host cell endoplasmic reticulum-to-Golgi apparatus transport and causes the disassembly of the Golgi complex, possibly through GBF1 interaction. This would result in depletion of MHC, trail receptors and IFN receptors at the host cell surface. Plays an essential role in viral RNA replication by recruiting ACBD3 and PI4KB at the viral replication sites, thereby allowing the formation of the rearranged membranous structures where viral replication takes place. Functionally, acts as a primer for viral RNA replication and remains covalently bound to viral genomic RNA. VPg is uridylylated prior to priming replication into VPg-pUpU. The VPg-pUpU is then used as primer on the genomic RNA poly(A) by the RNA-dependent RNA polymerase to replicate the viral genome. Following genome release from the infecting virion in the cytoplasm, the VPg-RNA linkage is probably removed by host TDP2. During the late stage of the replication cycle, host TDP2 is excluded from sites of viral RNA synthesis and encapsidation, allowing for the generation of progeny virions. In terms of biological role, cysteine protease that generates mature viral proteins from the precursor polyprotein. In addition to its proteolytic activity, it binds to viral RNA, and thus influences viral genome replication. RNA and substrate bind cooperatively to the protease. Its function is as follows. Replicates the viral genomic RNA on the surface of intracellular membranes. Covalently attaches UMP to a tyrosine of VPg, which is used to prime RNA synthesis. The positive stranded RNA genome is first replicated at virus induced membranous vesicles, creating a dsRNA genomic replication form. This dsRNA is then used as template to synthesize positive stranded RNA genomes. ss(+)RNA genomes are either translated, replicated or encapsidated. The protein is Genome polyprotein of Ljunganvirus 1 (LV).